The primary structure comprises 51 residues: Large ribosomal subunit protein eL39 (51 aa).

The protein belongs to the eukaryotic ribosomal protein eL39 family. Interacts with YIH1.

In Kluyveromyces lactis (strain ATCC 8585 / CBS 2359 / DSM 70799 / NBRC 1267 / NRRL Y-1140 / WM37) (Yeast), this protein is Large ribosomal subunit protein eL39 (RPL39).